The primary structure comprises 2410 residues: Cell wall alpha-1,3-glucan synthase ags1 (2410 aa).

A phosphoserine mark is found at Ser-1643, Ser-1644, and Ser-1651. Position 1653 is a phosphothreonine (Thr-1653). A disordered region spans residues 1685–1706; it reads SLSLGSRRGPGHTTEDDASDGL. Ser-1738 and Ser-1812 each carry phosphoserine. A disordered region spans residues 1796–1827; it reads QDDLSDPARSVDSDSVSPPLPPFVAGSNPNAR. Low complexity predominate over residues 1802 to 1827; sequence PARSVDSDSVSPPLPPFVAGSNPNAR.

It belongs to the glycosyltransferase group 1 family. As to quaternary structure, interacts with sad1.

It catalyses the reaction [(1-&gt;3)-alpha-D-glucosyl](n) + UDP-alpha-D-glucose = [(1-&gt;3)-alpha-D-glucosyl](n+1) + UDP + H(+). Functionally, required for alpha-1,3-glucan and alpha-1,4-glucan production which are required for cell wall synthesis. This chain is Cell wall alpha-1,3-glucan synthase ags1 (ags1), found in Schizosaccharomyces pombe (strain 972 / ATCC 24843) (Fission yeast).